A 402-amino-acid chain; its full sequence is Probable tRNA pseudouridine synthase D (402 aa).

Residue D94 is the Nucleophile of the active site. A TRUD domain is found at 175–364 (YILNYYGTQR…PGTRRKLITK (190 aa)).

It belongs to the pseudouridine synthase TruD family.

It catalyses the reaction uridine(13) in tRNA = pseudouridine(13) in tRNA. In terms of biological role, could be responsible for synthesis of pseudouridine from uracil-13 in transfer RNAs. This is Probable tRNA pseudouridine synthase D from Methanococcus aeolicus (strain ATCC BAA-1280 / DSM 17508 / OCM 812 / Nankai-3).